Reading from the N-terminus, the 189-residue chain is Putative manganese efflux pump MntP (189 aa).

6 consecutive transmembrane segments (helical) span residues 2 to 22, 36 to 56, 71 to 91, 106 to 126, 132 to 152, and 167 to 187; these read SLTE…AVSI, ILQM…IGYY, WIAF…SITA, LLLV…VSLS, ILYS…AAIL, and IVGG…HMFF.

Belongs to the MntP (TC 9.B.29) family.

The protein resides in the cell membrane. In terms of biological role, probably functions as a manganese efflux pump. This Ruminiclostridium cellulolyticum (strain ATCC 35319 / DSM 5812 / JCM 6584 / H10) (Clostridium cellulolyticum) protein is Putative manganese efflux pump MntP.